Here is a 290-residue protein sequence, read N- to C-terminus: MRIADKTVTRAILERHGFTFKKSFGQNFLTDTNILQKIVDTAEIDKGVNVIEIGPGIGALTEFLAENAAEVMAFEIDDRLIPILADTLARFDNVQVVNQDILKADLQTQIQAFKNPDLPIKVVANLPYYITTPILMHLIESKIPFAEFVVMMQKEVADRISAMPNTKAYGSLSIAVQYYMTAKVSFIVPRTVFVPAPNVDSVILKMVRRDQPVVSVQDEDFFFRVSKVAFVHRRKTLWNNLTSHFGKSEDTKAKLEKALEIAKIKPSIRGEALSIPDFASLADALKEVEI.

S-adenosyl-L-methionine is bound by residues N27, L29, G54, E75, D100, and N125.

Belongs to the class I-like SAM-binding methyltransferase superfamily. rRNA adenine N(6)-methyltransferase family. RsmA subfamily.

It localises to the cytoplasm. It carries out the reaction adenosine(1518)/adenosine(1519) in 16S rRNA + 4 S-adenosyl-L-methionine = N(6)-dimethyladenosine(1518)/N(6)-dimethyladenosine(1519) in 16S rRNA + 4 S-adenosyl-L-homocysteine + 4 H(+). Functionally, specifically dimethylates two adjacent adenosines (A1518 and A1519) in the loop of a conserved hairpin near the 3'-end of 16S rRNA in the 30S particle. May play a critical role in biogenesis of 30S subunits. The chain is Ribosomal RNA small subunit methyltransferase A from Streptococcus agalactiae serotype Ia (strain ATCC 27591 / A909 / CDC SS700).